Reading from the N-terminus, the 430-residue chain is Enolase (430 aa).

Gln165 serves as a coordination point for (2R)-2-phosphoglycerate. The active-site Proton donor is Glu207. Positions 244, 287, and 314 each coordinate Mg(2+). Lys339, Arg368, Ser369, and Lys390 together coordinate (2R)-2-phosphoglycerate. The active-site Proton acceptor is the Lys339.

This sequence belongs to the enolase family. In terms of assembly, component of the RNA degradosome, a multiprotein complex involved in RNA processing and mRNA degradation. Mg(2+) is required as a cofactor.

The protein resides in the cytoplasm. The protein localises to the secreted. It is found in the cell surface. The enzyme catalyses (2R)-2-phosphoglycerate = phosphoenolpyruvate + H2O. The protein operates within carbohydrate degradation; glycolysis; pyruvate from D-glyceraldehyde 3-phosphate: step 4/5. Catalyzes the reversible conversion of 2-phosphoglycerate (2-PG) into phosphoenolpyruvate (PEP). It is essential for the degradation of carbohydrates via glycolysis. The polypeptide is Enolase (Stenotrophomonas maltophilia (strain R551-3)).